Consider the following 746-residue polypeptide: Actin filament-associated protein 1-like 1 (746 aa).

A disordered region spans residues 88-206; the sequence is EDQKKEPEAN…RLTHQWPSEE (119 aa). The segment covering 98–107 has biased composition (polar residues); it reads HTVTKPSKTD. The span at 108–119 shows a compositional bias: pro residues; sequence SPPPLPNTPPPE. Residues 139 to 148 show a composition bias toward low complexity; it reads SRSSSSPPNS. One can recognise a PH 1 domain in the interval 214–310; the sequence is DCHICAFLLR…WLHVVRDVTG (97 aa). The disordered stretch occupies residues 336-371; the sequence is EKQTSDSDSMPSGESARDIRENGKPKRGALSELTGT. Basic and acidic residues predominate over residues 350–359; sequence SARDIRENGK. The region spanning 406–497 is the PH 2 domain; it reads RCGYVGVLVN…WLGVLLAETG (92 aa). Disordered regions lie at residues 539–596 and 723–746; these read EVPF…TRAQ and PSIYASTKGNVMQKAKEWESKKGT. Positions 562–575 are enriched in polar residues; the sequence is SFSSSDTGKPSPQI. A coiled-coil region spans residues 591–682; that stretch reads GKTRAQEDAR…VKENLKKSLA (92 aa). The segment covering 736–746 has biased composition (basic and acidic residues); it reads KAKEWESKKGT.

Its subcellular location is the cytoplasm. It localises to the cell projection. The protein localises to the podosome. It is found in the invadopodium. The protein resides in the cytoskeleton. Its subcellular location is the stress fiber. Functionally, may be involved in podosome and invadosome formation. This is Actin filament-associated protein 1-like 1 (afap1l1) from Danio rerio (Zebrafish).